Consider the following 432-residue polypeptide: MSKIVKVIGREIIDSRGNPTVEAEVHLEGGFVGMAAAPSGASTGSREALELRDGDKSRFLGKGVTKAVGAVNGPIAQAILGKDAKDQAGIDKIMIDLDGTENKSNFGANAILAVSLANAKAAAAAKGMPLYEHIAELNGTPGKYSMPVPMMNIINGGEHADNNVDIQEFMIQPVGAKTVKEAIRMGSEVFHHLAKVLKGKGMNTAVGDEGGYAPNLGSNAEALAVIAEAVKAAGYELGKNITLAMDCAASEFYKDGKYVLAGEGNKAFTSEEFTHFLEELTKQYPIVSIEDGLDESDWDGFAYQTKVLGDKIQLVGDDLFVTNTKILKEGIEKGIANSILIKFNQIGSLTETLAAIKMAKDAGYTAVISHRSGETEDATIADLAVGTAAGQIKTGSMSRSDRVAKYNQLIRIEEALGEKAPYNGRKEIKGQA.

A (2R)-2-phosphoglycerate-binding site is contributed by Gln167. The active-site Proton donor is the Glu209. Mg(2+) contacts are provided by Asp246, Glu290, and Asp317. (2R)-2-phosphoglycerate contacts are provided by Lys342, Arg371, Ser372, and Lys393. Lys342 acts as the Proton acceptor in catalysis.

This sequence belongs to the enolase family. In terms of assembly, component of the RNA degradosome, a multiprotein complex involved in RNA processing and mRNA degradation. The cofactor is Mg(2+).

The protein localises to the cytoplasm. It localises to the secreted. The protein resides in the cell surface. It catalyses the reaction (2R)-2-phosphoglycerate = phosphoenolpyruvate + H2O. It participates in carbohydrate degradation; glycolysis; pyruvate from D-glyceraldehyde 3-phosphate: step 4/5. In terms of biological role, catalyzes the reversible conversion of 2-phosphoglycerate (2-PG) into phosphoenolpyruvate (PEP). It is essential for the degradation of carbohydrates via glycolysis. This is Enolase from Salmonella dublin (strain CT_02021853).